A 204-amino-acid polypeptide reads, in one-letter code: Guanylate kinase (204 aa).

Residues 3–181 (GTLIIITAPS…ALDDLVAVVR (179 aa)) enclose the Guanylate kinase-like domain. 10-17 (APSGAGKT) is a binding site for ATP.

It belongs to the guanylate kinase family.

It localises to the cytoplasm. The enzyme catalyses GMP + ATP = GDP + ADP. Functionally, essential for recycling GMP and indirectly, cGMP. The polypeptide is Guanylate kinase (Aromatoleum aromaticum (strain DSM 19018 / LMG 30748 / EbN1) (Azoarcus sp. (strain EbN1))).